We begin with the raw amino-acid sequence, 372 residues long: sn-glycerol-3-phosphate import ATP-binding protein UgpC (372 aa).

The 232-residue stretch at 2–233 (LDIQQLVKTY…PASTFVASFI (232 aa)) folds into the ABC transporter domain. An ATP-binding site is contributed by 35 to 42 (GPSGCGKS).

It belongs to the ABC transporter superfamily. sn-glycerol-3-phosphate importer (TC 3.A.1.1.3) family. The complex is composed of two ATP-binding proteins (UgpC), two transmembrane proteins (UgpA and UgpE) and a solute-binding protein (UgpB).

It localises to the cell inner membrane. It carries out the reaction sn-glycerol 3-phosphate(out) + ATP + H2O = sn-glycerol 3-phosphate(in) + ADP + phosphate + H(+). Functionally, part of the ABC transporter complex UgpBAEC involved in sn-glycerol-3-phosphate (G3P) import. Responsible for energy coupling to the transport system. The protein is sn-glycerol-3-phosphate import ATP-binding protein UgpC of Vibrio vulnificus (strain YJ016).